Reading from the N-terminus, the 681-residue chain is MRKKLFGQLQRIGKALMLPVAILPAAGLLLAIGTAMQGEALQHYLPFIQNGGVQTVAKLMTGAGGIIFDNLPMIFALGVAIGLAGGDGVAAIAAFVGYIIMNKTMGDFLQVTPKNIGDPASGYASILGIPTLQTGVFGGIIIGALAAWCYNKFYNINLPSYLGFFAGKRFVPIMMATTSFILAFPMALIWPTIQSGLNAFSTGLLDSNTGVAVFLFGFIKRLLIPFGLHHIFHAPFWFEFGSWKNAAGEIIHGDQRIFIEQIREGAHLTAGKFMQGEFPVMMFGLPAAALAIYHTAKPENKKVVAGLMGSAALTSFLTGITEPLEFSFLFVAPLLFFIHAVLDGLSFLTLYLLDLHLGYTFSGGFIDYFLLGILPNKTQWWLVIPVGLVYAVIYYFVFRFLIVKLKYKTPGREDKQSQAATASATELPYAVLEAMGGKANIKHLDACITRLRVEVNDKSKVDVPGLKDLGASGVLEVGNNMQAIFGPKSDQIKHEMQQIMNGQVVENPTTMEDDKDETVVVAEDKSATSELSHIVHAPLTGEVTPLSEVPDQVFSEKMMGDGIAIKPSQGEVRAPFNGKVQMIFPTKHAIGLVSDSGLELLIHIGLDTVKLNGEGFTLHVEEGQEVKQGDLLINFDLDYIRKHAKSDITPIIVTQGNITNLDFKQGEHGNISFGDQLFEAK.

The PTS EIIC type-1 domain maps to 3–414; it reads KKLFGQLQRI…LKYKTPGRED (412 aa). Helical transmembrane passes span 16 to 36, 73 to 93, 126 to 146, 170 to 190, 199 to 219, 273 to 293, 303 to 323, 328 to 348, 355 to 375, and 383 to 403; these read LMLP…GTAM, MIFA…AAIA, ILGI…GALA, FVPI…ALIW, AFST…FGFI, FMQG…LAIY, VVAG…ITEP, FLFV…LSFL, LHLG…GILP, and VIPV…FLIV. The PTS EIIB type-1 domain occupies 425–506; the sequence is TELPYAVLEA…QQIMNGQVVE (82 aa). Cys-447 serves as the catalytic Phosphocysteine intermediate; for EIIB activity. One can recognise a PTS EIIA type-1 domain in the interval 551–655; that stretch reads DQVFSEKMMG…SDITPIIVTQ (105 aa). The Tele-phosphohistidine intermediate; for EIIA activity role is filled by His-603.

It is found in the cell membrane. The catalysed reaction is N(pros)-phospho-L-histidyl-[protein] + D-glucose(out) = D-glucose 6-phosphate(in) + L-histidyl-[protein]. The phosphoenolpyruvate-dependent sugar phosphotransferase system (sugar PTS), a major carbohydrate active transport system, catalyzes the phosphorylation of incoming sugar substrates concomitantly with their translocation across the cell membrane. This system is involved in glucose transport. The polypeptide is PTS system glucose-specific EIICBA component (ptsG) (Staphylococcus aureus (strain bovine RF122 / ET3-1)).